The chain runs to 241 residues: PRA1 family protein H (241 aa).

Transmembrane regions (helical) follow at residues 142-162, 189-205, and 209-228; these read LFIV…VGLL, LSIG…LTFL, and MALF…HAGF.

The protein belongs to the PRA1 family.

It localises to the endoplasmic reticulum membrane. In terms of biological role, may be involved in both secretory and endocytic intracellular trafficking in the endosomal/prevacuolar compartments. In Arabidopsis thaliana (Mouse-ear cress), this protein is PRA1 family protein H (PRA1H).